Reading from the N-terminus, the 384-residue chain is Acetylgalactosaminyl-O-glycosyl-glycoprotein beta-1,3-N-acetylglucosaminyltransferase (384 aa).

Residues 1 to 12 (MAFPCRRSLTAK) are Cytoplasmic-facing. The helical; Signal-anchor for type II membrane protein transmembrane segment at 13–31 (TLACLLVGVSFLALQQWFL) threads the bilayer. Residues 32–384 (QAPRSPREER…LSCDRGHRVS (353 aa)) lie on the Lumenal side of the membrane. Residues 34-68 (PRSPREERSPQEETPEGPTDAPAADEPPSELVPGP) form a disordered region. N73, N77, and N196 each carry an N-linked (GlcNAc...) asparagine glycan.

Belongs to the glycosyltransferase 31 family. In terms of tissue distribution, present in stomach and colon (at protein level). Restricted in the stomach, colon and small intestine, where core 3 structure is present.

Its subcellular location is the golgi apparatus membrane. It catalyses the reaction a 3-O-[N-acetyl-alpha-D-galactosaminyl]-L-threonyl-[protein] + UDP-N-acetyl-alpha-D-glucosamine = a 3-O-[N-acetyl-beta-D-glucosaminyl-(1-&gt;3)-N-acetyl-alpha-D-galactosaminyl]-L-threonyl-[protein] + UDP + H(+). The catalysed reaction is a 3-O-[N-acetyl-alpha-D-galactosaminyl]-L-seryl-[protein] + UDP-N-acetyl-alpha-D-glucosamine = 3-O-[N-acetyl-beta-D-glucosaminyl-(1-&gt;3)-N-acetyl-alpha-D-galactosaminyl]-L-seryl-[protein] + UDP + H(+). It participates in protein modification; protein glycosylation. In terms of biological role, beta-1,3-N-acetylglucosaminyltransferase that synthesizes the core 3 structure of the O-glycan, an important precursor in the biosynthesis of mucin-type glycoproteins. Plays an important role in the synthesis of mucin-type O-glycans in digestive organs. In Homo sapiens (Human), this protein is Acetylgalactosaminyl-O-glycosyl-glycoprotein beta-1,3-N-acetylglucosaminyltransferase (B3GNT6).